The following is a 118-amino-acid chain: Putative pterin-4-alpha-carbinolamine dehydratase (118 aa).

The protein belongs to the pterin-4-alpha-carbinolamine dehydratase family.

The enzyme catalyses (4aS,6R)-4a-hydroxy-L-erythro-5,6,7,8-tetrahydrobiopterin = (6R)-L-erythro-6,7-dihydrobiopterin + H2O. The sequence is that of Putative pterin-4-alpha-carbinolamine dehydratase from Pseudomonas savastanoi pv. phaseolicola (strain 1448A / Race 6) (Pseudomonas syringae pv. phaseolicola (strain 1448A / Race 6)).